Consider the following 290-residue polypeptide: Picrinine-N-methytransferase (290 aa).

Residues M71–G80 form an SAM motif I region. The Vacuolar targeting signal signature appears at D133–V139. Residues G134 to I142 are SAM motif II. Residues V161–I170 are SAM motif III.

The protein belongs to the class I-like SAM-binding methyltransferase superfamily. gTMT family. Homodimer. Accumulates in tissues actively synthesizing monoterpenoid indole alkaloids (MIAs) (at protein level). Mainly expressed in young leaves and, to a lower extent, in roots and stems.

Its subcellular location is the vacuole membrane. The catalysed reaction is picrinine + S-adenosyl-L-methionine = ervincine + S-adenosyl-L-homocysteine + H(+). It participates in alkaloid biosynthesis; vindoline biosynthesis. Functionally, S-adenosyl-L-methionine-dependent N-methyltransferase involved in the biosynthesis of biologically active monoterpenoid indole alkaloids (MIAs) natural products including vindoline. Catalyzes the conversion of picrinine to N-methylpicrinine (ervincine). Also accepts, with low efficiency, 21-hydroxycyclolochnericine and norajmaline as substrates. In Rauvolfia serpentina (Serpentine wood), this protein is Picrinine-N-methytransferase.